Here is a 344-residue protein sequence, read N- to C-terminus: DNA-directed RNA polymerase subunit alpha (344 aa).

Residues 1-246 (MLVEKFLKDF…EFLFPLVDFE (246 aa)) form an alpha N-terminal domain (alpha-NTD) region. The tract at residues 259 to 344 (ESSNLLDMSI…VLSKNVKISE (86 aa)) is alpha C-terminal domain (alpha-CTD).

The protein belongs to the RNA polymerase alpha chain family. Homodimer. The RNAP catalytic core consists of 2 alpha, 1 beta, 1 beta' and 1 omega subunit. When a sigma factor is associated with the core the holoenzyme is formed, which can initiate transcription.

The enzyme catalyses RNA(n) + a ribonucleoside 5'-triphosphate = RNA(n+1) + diphosphate. Its function is as follows. DNA-dependent RNA polymerase catalyzes the transcription of DNA into RNA using the four ribonucleoside triphosphates as substrates. This chain is DNA-directed RNA polymerase subunit alpha, found in Borreliella burgdorferi (strain ATCC 35210 / DSM 4680 / CIP 102532 / B31) (Borrelia burgdorferi).